The primary structure comprises 240 residues: 4-hydroxy-tetrahydrodipicolinate reductase (240 aa).

Residues 79–81 (ATT) and 103–106 (SANM) each bind NAD(+). Catalysis depends on H135, which acts as the Proton donor/acceptor. H136 provides a ligand contact to (S)-2,3,4,5-tetrahydrodipicolinate. Catalysis depends on K139, which acts as the Proton donor. Position 145-146 (145-146 (GT)) interacts with (S)-2,3,4,5-tetrahydrodipicolinate.

Belongs to the DapB family.

The protein resides in the cytoplasm. The catalysed reaction is (S)-2,3,4,5-tetrahydrodipicolinate + NAD(+) + H2O = (2S,4S)-4-hydroxy-2,3,4,5-tetrahydrodipicolinate + NADH + H(+). The enzyme catalyses (S)-2,3,4,5-tetrahydrodipicolinate + NADP(+) + H2O = (2S,4S)-4-hydroxy-2,3,4,5-tetrahydrodipicolinate + NADPH + H(+). It participates in amino-acid biosynthesis; L-lysine biosynthesis via DAP pathway; (S)-tetrahydrodipicolinate from L-aspartate: step 4/4. Catalyzes the conversion of 4-hydroxy-tetrahydrodipicolinate (HTPA) to tetrahydrodipicolinate. This chain is 4-hydroxy-tetrahydrodipicolinate reductase, found in Staphylococcus aureus (strain bovine RF122 / ET3-1).